A 78-amino-acid polypeptide reads, in one-letter code: UPF0270 protein YPO0179/y3960/YP_0178 (78 aa).

This sequence belongs to the UPF0270 family.

In Yersinia pestis, this protein is UPF0270 protein YPO0179/y3960/YP_0178.